The chain runs to 467 residues: Chromosomal replication initiator protein DnaA (467 aa).

Residues 1-85 are domain I, interacts with DnaA modulators; it reads MSLSLWQQCL…FEVGAKPASS (85 aa). Positions 85–130 are domain II; it reads SLQKGAVSPAAAAIPAAQVQTARVAPTIVRPGWDNVPAPAEPTYRS. The domain III, AAA+ region stretch occupies residues 131–347; the sequence is NVNVKHTFDN…GALNRVIANA (217 aa). Residues Gly175, Gly177, Lys178, and Thr179 each coordinate ATP. Residues 348–467 form a domain IV, binds dsDNA region; the sequence is NFTGRAITID…FSNLIRTLSS (120 aa).

This sequence belongs to the DnaA family. In terms of assembly, oligomerizes as a right-handed, spiral filament on DNA at oriC.

Its subcellular location is the cytoplasm. In terms of biological role, plays an essential role in the initiation and regulation of chromosomal replication. ATP-DnaA binds to the origin of replication (oriC) to initiate formation of the DNA replication initiation complex once per cell cycle. Binds the DnaA box (a 9 base pair repeat at the origin) and separates the double-stranded (ds)DNA. Forms a right-handed helical filament on oriC DNA; dsDNA binds to the exterior of the filament while single-stranded (ss)DNA is stabiized in the filament's interior. The ATP-DnaA-oriC complex binds and stabilizes one strand of the AT-rich DNA unwinding element (DUE), permitting loading of DNA polymerase. After initiation quickly degrades to an ADP-DnaA complex that is not apt for DNA replication. Binds acidic phospholipids. The sequence is that of Chromosomal replication initiator protein DnaA from Klebsiella pneumoniae (strain 342).